The chain runs to 141 residues: Hemoglobin subunit alpha (141 aa).

Positions 1–141 constitute a Globin domain; it reads VLSPADKSNV…VSTVLTSKYR (141 aa). Ser-3 is modified (phosphoserine). Residues Lys-7 and Lys-11 each carry the N6-succinyllysine modification. Lys-16 bears the N6-acetyllysine; alternate mark. At Lys-16 the chain carries N6-succinyllysine; alternate. A Phosphotyrosine modification is found at Tyr-24. Ser-35 carries the phosphoserine modification. Lys-40 carries the post-translational modification N6-succinyllysine. At Ser-49 the chain carries Phosphoserine. Position 58 (His-58) interacts with O2. His-87 serves as a coordination point for heme b. Ser-102 bears the Phosphoserine mark. At Thr-108 the chain carries Phosphothreonine. 2 positions are modified to phosphoserine: Ser-124 and Ser-131. Phosphothreonine occurs at positions 134 and 137. Ser-138 is modified (phosphoserine).

Belongs to the globin family. In terms of assembly, heterotetramer of two alpha chains and two beta chains. In terms of tissue distribution, red blood cells.

Involved in oxygen transport from the lung to the various peripheral tissues. In terms of biological role, hemopressin acts as an antagonist peptide of the cannabinoid receptor CNR1. Hemopressin-binding efficiently blocks cannabinoid receptor CNR1 and subsequent signaling. In Saguinus oedipus (Cotton-top tamarin), this protein is Hemoglobin subunit alpha (HBA).